Reading from the N-terminus, the 455-residue chain is L-serine dehydratase (455 aa).

Belongs to the iron-sulfur dependent L-serine dehydratase family. The cofactor is [4Fe-4S] cluster.

It catalyses the reaction L-serine = pyruvate + NH4(+). It functions in the pathway carbohydrate biosynthesis; gluconeogenesis. The sequence is that of L-serine dehydratase (sdaA) from Helicobacter pylori (strain J99 / ATCC 700824) (Campylobacter pylori J99).